The following is a 601-amino-acid chain: ATP-dependent RNA helicase DeaD (601 aa).

The Q motif motif lies at 6-34; it reads STFSFLGLNPFIIKSLSKMGYVKPSPIQA. In terms of domain architecture, Helicase ATP-binding spans 37–208; the sequence is IPLLLEGRDV…KRFMKNPQEI (172 aa). Residue 50–57 coordinates ATP; sequence AQTGSGKT. The DEAD box signature appears at 156–159; it reads DEAD. The 148-residue stretch at 231 to 378 folds into the Helicase C-terminal domain; the sequence is KTDALIRFLE…EVQLPKIEVL (148 aa). Residues 564-581 are compositionally biased toward basic and acidic residues; the sequence is SIFNKDKNNKRRFSDNRL. Residues 564 to 601 are disordered; sequence SIFNKDKNNKRRFSDNRLNKSSSIKNETKSSFFRRKSV. Polar residues predominate over residues 582–594; it reads NKSSSIKNETKSS.

Belongs to the DEAD box helicase family. DeaD/CsdA subfamily.

The protein localises to the cytoplasm. The enzyme catalyses ATP + H2O = ADP + phosphate + H(+). In terms of biological role, DEAD-box RNA helicase involved in various cellular processes at low temperature, including ribosome biogenesis, mRNA degradation and translation initiation. The protein is ATP-dependent RNA helicase DeaD of Buchnera aphidicola subsp. Schizaphis graminum (strain Sg).